Here is a 363-residue protein sequence, read N- to C-terminus: Peptide chain release factor 1 (363 aa).

Gln237 bears the N5-methylglutamine mark.

The protein belongs to the prokaryotic/mitochondrial release factor family. Methylated by PrmC. Methylation increases the termination efficiency of RF1.

Its subcellular location is the cytoplasm. Peptide chain release factor 1 directs the termination of translation in response to the peptide chain termination codons UAG and UAA. The polypeptide is Peptide chain release factor 1 (Mesoplasma florum (strain ATCC 33453 / NBRC 100688 / NCTC 11704 / L1) (Acholeplasma florum)).